A 572-amino-acid chain; its full sequence is MKVSELFMPTLKETPSDAEIESHKLMLRSGFMRQLSSGIYVYLPLGYRVLRKIENIVREEMDRSGAQEVHMSALMPKELWEESGRWAVFGPEMFRIKDRNEREYCLGPTHEEAFTYIVRNEISSYRDLPKILYQIQTKFRDERRPRFGVMRCREFTMKDAYSFDIDENGLDISYQKMYDAYVRIFKRCGLDVKIVEADTGAMGGASSHEFMVPSSVGEAEIAYCKACGYAANLEKAECLDEPVENKEEPKEKQEVYTPNVRTIEELVSFLGIDSTRFVKTMIYKADDKFVAVLVRGDREVNETKLKNLLKATDLELASAEDVEKITGAKVGFAGPIGLSIDVYADNEVKYLKNFVVGANKTDYHIKNVNLSDFKVTKFTDLRNITQDDLCPKCRSQKVTIERGIEVGHIFKLGTKYTQAFNCVYTDEKGEKKLMIMGCYGIGINRTAAAIIEQMHDEDGIIWPITVAPYEVIIVPVNVKDENQKKIAFEIYENLQRNGVEVLIDDRDERAGVKFKDADLIGIPFRVTVGKKISEGKLEIRNRRTKESFEVEIEKAIEVVINLIREEKAKYQI.

It belongs to the class-II aminoacyl-tRNA synthetase family. ProS type 1 subfamily. As to quaternary structure, homodimer.

It localises to the cytoplasm. It catalyses the reaction tRNA(Pro) + L-proline + ATP = L-prolyl-tRNA(Pro) + AMP + diphosphate. In terms of biological role, catalyzes the attachment of proline to tRNA(Pro) in a two-step reaction: proline is first activated by ATP to form Pro-AMP and then transferred to the acceptor end of tRNA(Pro). As ProRS can inadvertently accommodate and process non-cognate amino acids such as alanine and cysteine, to avoid such errors it has two additional distinct editing activities against alanine. One activity is designated as 'pretransfer' editing and involves the tRNA(Pro)-independent hydrolysis of activated Ala-AMP. The other activity is designated 'posttransfer' editing and involves deacylation of mischarged Ala-tRNA(Pro). The misacylated Cys-tRNA(Pro) is not edited by ProRS. The protein is Proline--tRNA ligase of Caldicellulosiruptor bescii (strain ATCC BAA-1888 / DSM 6725 / KCTC 15123 / Z-1320) (Anaerocellum thermophilum).